The chain runs to 148 residues: Large ribosomal subunit protein bL9 (148 aa).

It belongs to the bacterial ribosomal protein bL9 family.

In terms of biological role, binds to the 23S rRNA. This is Large ribosomal subunit protein bL9 from Pseudomonas aeruginosa (strain LESB58).